Here is an 85-residue protein sequence, read N- to C-terminus: Cytochrome b (85 aa).

The next 3 membrane-spanning stretches (helical) occupy residues Leu-1–Met-8, Trp-32–Ile-53, and Trp-68–Gly-85. Residues His-38 and His-52 each coordinate heme b.

The protein belongs to the cytochrome b family. The cytochrome bc1 complex contains 3 respiratory subunits (MT-CYB, CYC1 and UQCRFS1), 2 core proteins (UQCRC1 and UQCRC2) and probably 6 low-molecular weight proteins. It depends on heme b as a cofactor.

It localises to the mitochondrion inner membrane. Functionally, component of the ubiquinol-cytochrome c reductase complex (complex III or cytochrome b-c1 complex) that is part of the mitochondrial respiratory chain. The b-c1 complex mediates electron transfer from ubiquinol to cytochrome c. Contributes to the generation of a proton gradient across the mitochondrial membrane that is then used for ATP synthesis. The protein is Cytochrome b (mt-cyb) of Pomoxis nigromaculatus (Black crappie).